A 324-amino-acid polypeptide reads, in one-letter code: Olfactory receptor 11H4 (324 aa).

Over 1 to 35 (MSFFFVDLRPMNRSATHIVTEFILLGFPGCWKIQI) the chain is Extracellular. The N-linked (GlcNAc...) asparagine glycan is linked to Asn12. A helical transmembrane segment spans residues 36–56 (FLFSLFLVIYVLTLLGNGAII). At 57–64 (YAVRCNPL) the chain is on the cytoplasmic side. Residues 65-85 (LHTPMYFLLGNFAFLEIWYVS) traverse the membrane as a helical segment. Residues 86–109 (STIPNMLVNILSKTKAISFSGCFL) lie on the Extracellular side of the membrane. Cys107 and Cys199 form a disulfide bridge. A helical transmembrane segment spans residues 110–130 (QFYFFFSLGTTECLFLAVMAY). The Cytoplasmic segment spans residues 131–149 (DRYLAICHPLQYPAIMTVR). A helical transmembrane segment spans residues 150–170 (FCGKLVSFCWLIGFLGYPIPI). Topologically, residues 171–207 (FYISQLPFCGPNIIDHFLCDMDPLMALSCAPAPITEC) are extracellular. Residues 208-227 (IFYTQSSLVLFFTSMYILRS) traverse the membrane as a helical segment. Residues 228-247 (YILLLTAVFQVPSAAGRRKA) are Cytoplasmic-facing. The helical transmembrane segment at 248 to 268 (FSTCGSHLVVVSLFYGTVMVM) threads the bilayer. At 269–281 (YVSPTYGIPTLLQ) the chain is on the extracellular side. Residues 282-302 (KILTLVYSVTTPLFNPLIYTL) traverse the membrane as a helical segment. Topologically, residues 303–324 (RNKDMKLALRNVLFGMRIRQNS) are cytoplasmic.

It belongs to the G-protein coupled receptor 1 family.

Its subcellular location is the cell membrane. Odorant receptor. This chain is Olfactory receptor 11H4 (OR11H4), found in Homo sapiens (Human).